The chain runs to 248 residues: tRNA (guanine-N(1)-)-methyltransferase (248 aa).

S-adenosyl-L-methionine-binding positions include Gly-113 and 133 to 138 (VGDYVL).

It belongs to the RNA methyltransferase TrmD family. In terms of assembly, homodimer.

It localises to the cytoplasm. It catalyses the reaction guanosine(37) in tRNA + S-adenosyl-L-methionine = N(1)-methylguanosine(37) in tRNA + S-adenosyl-L-homocysteine + H(+). Its function is as follows. Specifically methylates guanosine-37 in various tRNAs. This is tRNA (guanine-N(1)-)-methyltransferase from Shewanella oneidensis (strain ATCC 700550 / JCM 31522 / CIP 106686 / LMG 19005 / NCIMB 14063 / MR-1).